A 1055-amino-acid chain; its full sequence is Endo-1,4-beta-xylanase A (1055 aa).

An N-terminal signal peptide occupies residues 1–29 (MRKKRRGFLNASTAVLVGILAGFLGVVLA). The segment at 30–357 (ATGALGFAVR…TTSAEIKLEM (328 aa)) is a. Residues 360 to 688 (EEEIPALKDV…KLAYWAIVAP (329 aa)) enclose the GH10 domain. Catalysis depends on Glu-498, which acts as the Proton donor. The Nucleophile role is filled by Glu-604. CBM-cenC domains lie at 720-851 (PIEI…TNSQ) and 895-1040 (KSVA…PTNN).

The protein belongs to the glycosyl hydrolase 10 (cellulase F) family.

It carries out the reaction Endohydrolysis of (1-&gt;4)-beta-D-xylosidic linkages in xylans.. The sequence is that of Endo-1,4-beta-xylanase A (xynA) from Thermotoga neapolitana.